Consider the following 2013-residue polypeptide: Cell adhesion molecule DSCAM (2013 aa).

Positions 1–17 are cleaved as a signal peptide; it reads MWILALSLFQSFANVFS. The Extracellular segment spans residues 18–1594; it reads EEPHSSLYFV…EGLTTNEGLK (1577 aa). 9 consecutive Ig-like C2-type domains span residues 20-119, 125-216, 225-305, 313-401, 407-500, 504-592, 596-685, 690-783, and 787-883; these read PHSS…VHIK, PYTV…ARLF, PSIL…AKVI, PLKA…VQVV, PKII…ARIN, PASI…VHVT, PPFI…SQLI, PKFV…MYLT, and PAMI…LTVQ. 9 disulfides stabilise this stretch: C46–C102, C145–C197, C246–C293, C335–C385, C428–C484, C525–C575, C617–C669, C711–C766, and C809–C865. N-linked (GlcNAc...) asparagine glycosylation is present at N78. Residue N470 is glycosylated (N-linked (GlcNAc...) asparagine). An N-linked (GlcNAc...) asparagine glycan is attached at N666. Fibronectin type-III domains follow at residues 885 to 982, 987 to 1086, 1091 to 1187, and 1191 to 1285; these read PPDP…ADEA, PPQE…TLED, PPEN…TKED, and PPAG…AKAP. N1160 and N1250 each carry an N-linked (GlcNAc...) asparagine glycan. The region spanning 1285–1377 is the Ig-like C2-type 10 domain; it reads PARILTFSGT…DEIILNLQVQ (93 aa). C1307 and C1359 are joined by a disulfide. Fibronectin type-III domains follow at residues 1379–1473 and 1474–1575; these read PPDQ…TLGK and EPQF…TIPP. Residues 1595–1615 traverse the membrane as a helical segment; sequence ILVTISCILVGVLLLFVLLLV. Topologically, residues 1616–2013 are cytoplasmic; the sequence is VRRRRREQRL…NPYAKSYTLV (398 aa). Residues 1616 to 2013 are required for netrin-mediated axon repulsion of neuronal growth cones; that stretch reads VRRRRREQRL…NPYAKSYTLV (398 aa). Disordered regions lie at residues 1718–1809 and 1920–2013; these read LVDV…SASS and RDLS…YTLV. Positions 1799–1809 are enriched in low complexity; sequence SSMVSTESASS. Residues 1949 to 1968 show a composition bias toward polar residues; the sequence is EASSSTSSTREGQQSWQQGA.

In terms of assembly, homodimer; mediates homophilic interactions to promote cell adhesion. Interacts with DCC; the interaction is abolished in response to NTN1. Interacts (via extracellular domain) with NTN1. Interacts (via extracellular domain) with UNC5C (via Ig-like C2-type domain). Interacts with PTK2. Interacts with FYN. In terms of processing, phosphorylated at tyrosine residues. Phosphorylation is enhanced by NTN1. As to expression, expressed in cortical and cerebellar neurons, in cells of the external and internal granular layer and of the Purkinje cell layer (at protein level). In the retina, expressed in dopaminergic and Nos1-positive amacrine cells and most retinal ganglion cells (at protein level). Expressed in the brain with highest levels in the cortex, olfactory bulb, hippocampus, thalamus, cerebellum and spinal cord. Expressed in the retinal ganglion layer (RGL).

It is found in the cell membrane. It localises to the cell projection. The protein resides in the axon. Its subcellular location is the synapse. The protein localises to the dendrite. It is found in the growth cone. Cell adhesion molecule that plays a role in neuronal self-avoidance. Promotes repulsion between specific neuronal processes of either the same cell or the same subtype of cells. Mediates within retinal amacrine and ganglion cell subtypes both isoneuronal self-avoidance for creating an orderly dendritic arborization and heteroneuronal self-avoidance to maintain the mosaic spacing between amacrine and ganglion cell bodies. Receptor for netrin required for axon guidance independently of and in collaboration with the receptor DCC. Might also collaborate with UNC5C in NTN1-mediated axon repulsion independently of DCC. In spinal cord development plays a role in guiding commissural axons projection and pathfinding across the ventral midline to reach the floor plate upon ligand binding. Mediates intracellular signaling by stimulating the activation of MAPK8 and MAP kinase p38. Adhesion molecule that promotes lamina-specific synaptic connections in the retina: expressed in specific subsets of interneurons and retinal ganglion cells (RGCs) and promotes synaptic connectivity via homophilic interactions. The sequence is that of Cell adhesion molecule DSCAM (Dscam) from Mus musculus (Mouse).